Here is a 764-residue protein sequence, read N- to C-terminus: 5-methyltetrahydropteroyltriglutamate--homocysteine methyltransferase (764 aa).

5-methyltetrahydropteroyltri-L-glutamate-binding positions include R16–K19 and K121. L-homocysteine is bound by residues I440–S442 and E493. Residues I440–S442 and E493 contribute to the L-methionine site. Residues R524–C525 and W570 contribute to the 5-methyltetrahydropteroyltri-L-glutamate site. Residue D608 participates in L-homocysteine binding. Residue D608 coordinates L-methionine. Residue E614 coordinates 5-methyltetrahydropteroyltri-L-glutamate. H650, C652, and E674 together coordinate Zn(2+). The active-site Proton donor is H703. Residue C735 coordinates Zn(2+).

This sequence belongs to the vitamin-B12 independent methionine synthase family. It depends on Zn(2+) as a cofactor.

It carries out the reaction 5-methyltetrahydropteroyltri-L-glutamate + L-homocysteine = tetrahydropteroyltri-L-glutamate + L-methionine. It participates in amino-acid biosynthesis; L-methionine biosynthesis via de novo pathway; L-methionine from L-homocysteine (MetE route): step 1/1. In terms of biological role, catalyzes the transfer of a methyl group from 5-methyltetrahydrofolate to homocysteine resulting in methionine formation. The polypeptide is 5-methyltetrahydropteroyltriglutamate--homocysteine methyltransferase (Burkholderia cenocepacia (strain HI2424)).